Consider the following 161-residue polypeptide: Probable calcium-binding protein CML16 (161 aa).

EF-hand domains lie at 8 to 43 (DQIK…LGIK), 44 to 79 (PRGD…DINE), 83 to 118 (INQE…MGHP), and 119 to 154 (LTYR…SAAD). Positions 21, 23, 25, 27, 32, 57, 59, 61, 63, 68, 96, 98, 100, 102, 107, 132, 134, 136, and 143 each coordinate Ca(2+).

Functionally, potential calcium sensor. The chain is Probable calcium-binding protein CML16 (CML16) from Arabidopsis thaliana (Mouse-ear cress).